The sequence spans 284 residues: Undecaprenyl-diphosphatase (284 aa).

A run of 8 helical transmembrane segments spans residues 7–27, 44–64, 90–110, 116–136, 167–187, 197–217, 229–249, and 259–279; these read IILGVIEGITEWLPISSTGHL, EMFDVVIQLGAILSVVVLYFH, LWLKVLIAALPAAIIGLPLND, FYHFVPVAFMLIIYGVAFIVI, VLSLLPGTSRSGATIVGALLV, FTFFLGIPVMFGASFIKILHF, FGVLLVACIVAFGVSMVAIKF, and FTFFGKYRIVLGIILLIYAMF.

This sequence belongs to the UppP family.

The protein localises to the cell membrane. The enzyme catalyses di-trans,octa-cis-undecaprenyl diphosphate + H2O = di-trans,octa-cis-undecaprenyl phosphate + phosphate + H(+). Functionally, catalyzes the dephosphorylation of undecaprenyl diphosphate (UPP). Confers resistance to bacitracin. In Lactococcus lactis subsp. lactis (strain IL1403) (Streptococcus lactis), this protein is Undecaprenyl-diphosphatase.